A 566-amino-acid chain; its full sequence is MLNKLCKILFFINLLLVAVQSYASPPPSLPAAEIDTKDKDVSSNSDISFFDKFKQFFSKSKKKNISPKQPNEQTKAANQEEPKLASQEHTEADASEPFIDTGNTALPSVTASNEHENSVNLASHDIQESNETEASKPFIDVGNTALPSAASNDVHTNTEHENSTNLASNIITPNVPRPIVSMPPAQAGSYVVPPQRPVQIYKPTNLPPVHKPIPLNPSPEANKEEESVAPIAPQSIPNMPAVSPPVVSPPVIQDTTTPSTMPTTVPPAVPSNVPAPPVMPTNQPSTQPITPPSPNTPVTTPSKVVPTTDSSAEINNSQETFVAVSDVPKKQDWNTPLIPVVVVKPNQPQALEKQVNNNQTTNNQEKSPPVSSSNVTIQKQDDKVNNETSESTTKFVKDETQMLLLPDDDIVLGKLTEQATLEQMDMYAYIELFQKKEEWIASAKRRKVVESFIKYDNDINKKKDIYANLSYCKAVDNAFRAVDRNNLFGLRALLDVYPILQEKSRSGETLLTAAIYNDNYYLAKFLVIRGIKISTLNDECQYPLDIALAQGNANIACMLIKAKGYQ.

Disordered regions lie at residues 61–118 (KKKN…HENS), 276–314 (PPVM…SAEI), and 355–392 (VNNN…SEST). The segment covering 78–92 (NQEEPKLASQEHTEA) has biased composition (basic and acidic residues). A compositionally biased stretch (polar residues) spans 101–112 (TGNTALPSVTAS). The segment covering 296 to 308 (TPVTTPSKVVPTT) has biased composition (low complexity). Residues 365–378 (EKSPPVSSSNVTIQ) are compositionally biased toward polar residues. 2 ANK repeats span residues 506-535 (SGET…KIST) and 539-566 (ECQY…KGYQ).

The chain is Putative ankyrin repeat protein RF_0987 from Rickettsia felis (strain ATCC VR-1525 / URRWXCal2) (Rickettsia azadi).